The sequence spans 331 residues: Ribosomal RNA small subunit methyltransferase H (331 aa).

S-adenosyl-L-methionine-binding positions include 38–40 (GGY), Asp-56, Phe-83, Asp-100, and Gln-107. The tract at residues 289-331 (AELAENPRARSARLRVGVRTDAPAGKVDPQALGTPLIPKKGRR) is disordered.

It belongs to the methyltransferase superfamily. RsmH family.

The protein resides in the cytoplasm. The catalysed reaction is cytidine(1402) in 16S rRNA + S-adenosyl-L-methionine = N(4)-methylcytidine(1402) in 16S rRNA + S-adenosyl-L-homocysteine + H(+). Its function is as follows. Specifically methylates the N4 position of cytidine in position 1402 (C1402) of 16S rRNA. This Cereibacter sphaeroides (strain ATCC 17029 / ATH 2.4.9) (Rhodobacter sphaeroides) protein is Ribosomal RNA small subunit methyltransferase H.